We begin with the raw amino-acid sequence, 184 residues long: Large ribosomal subunit protein uL5c (184 aa).

It belongs to the universal ribosomal protein uL5 family. Part of the 50S ribosomal subunit; contacts the 5S rRNA.

The protein resides in the plastid. The protein localises to the chloroplast. Functionally, binds 5S rRNA, forms part of the central protuberance of the 50S subunit. The polypeptide is Large ribosomal subunit protein uL5c (rpl5) (Mesostigma viride (Green alga)).